The primary structure comprises 105 residues: Met repressor (105 aa).

The protein belongs to the MetJ family. As to quaternary structure, homodimer.

The protein resides in the cytoplasm. Its function is as follows. This regulatory protein, when combined with SAM (S-adenosylmethionine) represses the expression of the methionine regulon and of enzymes involved in SAM synthesis. The sequence is that of Met repressor from Yersinia pestis bv. Antiqua (strain Antiqua).